Here is an 847-residue protein sequence, read N- to C-terminus: E4 SUMO-protein ligase PIAL1 (847 aa).

The tract at residues 113 to 271 (VNSPVTLISQ…EVVGSNSDCD (159 aa)) is interacting domain (IND), required for interaction with MOM1 and PIAL2. The segment at 268–349 (SDCDIIEGPS…LRKILEEVGR (82 aa)) adopts an SP-RING-type zinc-finger fold. Positions 299, 301, 322, and 325 each coordinate Zn(2+). Repeat copies occupy residues 569–591 (QRPV…ENAD), 592–614 (QRWM…GNTN), 615–637 (QRPI…GNTD), 638–659 (HRST…GNAD), 660–682 (QRPM…GYAH), 683–705 (QRPM…GTPD), and 706–728 (QRPM…GTTD). A 7 X 23 AA approximate tandem repeats region spans residues 569–728 (QRPVPSYIAH…LPVSYGGTTD (160 aa)).

The protein belongs to the PIAL protein ligase family. In terms of assembly, homodimer. Interacts with MOM1 and PIAL2 to form a high molecular mass complex which mediates transcriptional gene silencing at heterochromatin regions. Expressed in leaves, stems and flowers, and, at low levels, in siliques and old leaves.

The protein localises to the nucleus. Its pathway is protein modification; protein sumoylation. In terms of biological role, together with MOM1 and PIAL2, regulates transcriptional gene silencing (TGS) independently of changes in DNA methylation. E4-type SUMO ligase that promotes SUMO chain formation in a SCE1-dependent manner and thus contributes to a pathway for proteolytic removal of sumoylation substrates. Involved in stress responses (e.g. osmotic, salt and abscisic acid ABA) and sulfur metabolism. The sequence is that of E4 SUMO-protein ligase PIAL1 from Arabidopsis thaliana (Mouse-ear cress).